Reading from the N-terminus, the 130-residue chain is MKALLALGFLASWVAAGEHALRGECPADPLPCQELCTGDESCPQGHKCCSTGCGHACRGDIEGGRDGQCPRILVGLCIVQCMMDENCQSGERCCKSGCGRFCIPGLQPLQQLKDSNLTDGFNSKLEAQAP.

A signal peptide spans 1–16 (MKALLALGFLASWVAA). WAP domains are found at residues 17–61 (GEHA…RGDI) and 62–106 (EGGR…IPGL). Cystine bridges form between C25-C49, C32-C53, C36-C48, C42-C57, C69-C94, C77-C98, C81-C93, and C87-C102. The N-linked (GlcNAc...) asparagine glycan is linked to N116.

The protein resides in the secreted. This is WAP four-disulfide core domain protein 3 (Wfdc3) from Mus musculus (Mouse).